An 895-amino-acid polypeptide reads, in one-letter code: ABC-transporter-regulating transcription factor (895 aa).

The zn(2)-C6 fungal-type DNA-binding region spans 69 to 96 (CDMCRKKKIKCDGKMPKCSHCTNYKTDC). The interval 156 to 218 (HASGSNTPHN…QKESETEVEG (63 aa)) is disordered. The span at 158-207 (SGSNTPHNPQKINIPSQSQIAMSQQNSSSHYSTPRLESQSSPRTAATSPE) shows a compositional bias: polar residues. Residues 648–668 (CVWLILYYPVSALVTLFANIL) form a helical membrane-spanning segment. A disordered region spans residues 726-813 (ESYSKKKRKS…TGVSTNIPPN (88 aa)). Residues 755–765 (PSTTQPTQAPS) are compositionally biased toward low complexity.

In terms of assembly, interacts with ncaA.

It is found in the nucleus. The protein localises to the membrane. Its function is as follows. Transcription factor that regulates expression of the genes related to ergosterol biosynthesis, including erg3B, erg24A, erg25A, as well as cyp51A that encodes a target protein of azoles. In coordination with ffmA and ncaA, is responsible for the expression of the ABC transporter abcC/cdr1B/abcG1 related to azole resistance. Directly binds both the cyp51A and abcC/cdr1B/abcG1 promoters at a conserved 34 bp region called the atrR response element (ATRE). AtrR also binds to the promoter regions of both the sterol response transcription factor srbA and atrR genes themselves, the latter suggesting the possibility that atrR is autoregulated. Also regulates iron uptake, most likely via cooperation with SrbA. AtrR is necessary for hypoxia adaptation and virulence. This chain is ABC-transporter-regulating transcription factor, found in Aspergillus fumigatus (strain ATCC MYA-4609 / CBS 101355 / FGSC A1100 / Af293) (Neosartorya fumigata).